We begin with the raw amino-acid sequence, 273 residues long: Transmembrane epididymal protein 1 (273 aa).

6 helical membrane-spanning segments follow: residues 34–54 (IVTG…GMVL), 72–92 (LTMF…KNVL), 96–116 (CVGL…LLMV), 129–149 (VYSL…AELW), 158–178 (LMET…GFIL), and 195–215 (IMFV…FLLG).

Belongs to the TMEM45 family.

The protein localises to the membrane. The sequence is that of Transmembrane epididymal protein 1 (TEDDM1) from Homo sapiens (Human).